We begin with the raw amino-acid sequence, 252 residues long: Short chain dehydrogenase andC (252 aa).

The N-terminal stretch at 1–25 (MGFLQDKVVIITGAAAGIGLATATA) is a signal peptide. NADP(+) is bound by residues I11, D57, and R119. S137 functions as the Proton donor in the catalytic mechanism. Residues Y151 and K155 each contribute to the NADP(+) site. Y151 (proton acceptor) is an active-site residue. The active-site Lowers pKa of active site Tyr is K155.

This sequence belongs to the short-chain dehydrogenases/reductases (SDR) family.

It participates in secondary metabolite biosynthesis; terpenoid biosynthesis. Its function is as follows. Short chain dehydrogenase; part of the gene cluster that mediates the biosynthesis of anditomin, a fungal meroterpenoid. The first step of the pathway is the synthesis of 3,5-dimethylorsellinic acid (DMOA) by the polyketide synthase andM. DMOA is then converted to the phthalide compound 5,7-dihydroxy-4,6-dimethylphthalide (DHDMP) by the cytochrome P450 monooxygenase andK, which is further prenylated by the prenyltransferase andD to yield farnesyl-DHDMP. Further epoxidation by the FAD-dependent monooxygenase andE leads to epoxyfarnesyl-DHDMP. The next step involves the terpene cyclase andB that converts epoxyfarnesyl-DHDMP into preandiloid A through opening of the epoxide ring followed by the cyclization of the farnesyl moiety. Preandiloid A is in turn oxidized at the C-3 hydroxyl group to yield preandiloid B by the dehydrogenase andC. The dioxygenase andA is solely responsible for the dehydrogenation of preandiloid B leading to the enone preandiloid C, as well as for the intriguing structural rearrangement to generate the bicyclo[2.2.2]octane core, transforming preandiloid C into andiconin. FAD-binding monooxygenase andJ then produces andilesin D which is reduced by dehydrogenase andI to yield andilesin A. Action of acetyltransferase andG followed by a spontaneous acetate elimination leads then to andilesin B, which is in turn substrate of the short chain dehydrogenase andH to yield andilesin C. Finally, the dioxygenase andF catalyzes the transformation of andilesin C to anditomin. The chain is Short chain dehydrogenase andC from Emericella variicolor (Aspergillus stellatus).